The sequence spans 372 residues: Mevalonate 3,5-bisphosphate decarboxylase (372 aa).

It belongs to the mevalonate 3,5-bisphosphate decarboxylase family. Homodimer.

The catalysed reaction is (R)-3,5-bisphosphomevalonate + H(+) = isopentenyl phosphate + phosphate + CO2. Its pathway is isoprenoid biosynthesis; isopentenyl diphosphate biosynthesis via mevalonate pathway. In terms of biological role, catalyzes the ATP-independent decarboxylation of (R)-mevalonate 3,5-bisphosphate to isopentenyl phosphate. Functions in an alternative mevalonate pathway, only present in extreme acidophiles of the Thermoplasmatales order, which passes through mevalonate 3-phosphate rather than mevalonate 5-phosphate. In Thermoplasma volcanium (strain ATCC 51530 / DSM 4299 / JCM 9571 / NBRC 15438 / GSS1), this protein is Mevalonate 3,5-bisphosphate decarboxylase.